The chain runs to 186 residues: MAIPATQMRPGMIIKHNGELHAVFSVEHRTPGNLRAFIQAKLRNLRSGAMFEHRFRSPDPIERVIVDEIPMEFLYNDGDDYYFMNTENFEQTHLKRDTLGDAVEYLTANLQITVSFFDGVAVGIELPQTVELTVVETEPGLKSATASSVTKPATLETGLVVQVPPFINEGEKIRVDTAEGAYLSRA.

Belongs to the elongation factor P family.

It localises to the cytoplasm. Its pathway is protein biosynthesis; polypeptide chain elongation. In terms of biological role, involved in peptide bond synthesis. Stimulates efficient translation and peptide-bond synthesis on native or reconstituted 70S ribosomes in vitro. Probably functions indirectly by altering the affinity of the ribosome for aminoacyl-tRNA, thus increasing their reactivity as acceptors for peptidyl transferase. The polypeptide is Elongation factor P (Acidobacterium capsulatum (strain ATCC 51196 / DSM 11244 / BCRC 80197 / JCM 7670 / NBRC 15755 / NCIMB 13165 / 161)).